A 317-amino-acid chain; its full sequence is Mitochondrial thiamine pyrophosphate carrier 1 (317 aa).

Solcar repeat units lie at residues 12-110, 120-206, and 214-309; these read GTRR…TTQV, PPAL…LRPV, and PFGS…SLKL. The next 6 membrane-spanning stretches (helical) occupy residues 17-35, 91-107, 126-146, 181-198, 220-240, and 284-301; these read VVLS…VAPL, LMYV…YRTT, FVSG…LDLL, GCSA…LFFA, AAAG…LDLV, and GLTV…ITMW.

The protein belongs to the mitochondrial carrier (TC 2.A.29) family.

Its subcellular location is the mitochondrion inner membrane. In terms of biological role, mitochondrial transporter that mediates uptake of thiamine pyrophosphate (ThPP) into mitochondria. The polypeptide is Mitochondrial thiamine pyrophosphate carrier 1 (tpc1) (Neosartorya fischeri (strain ATCC 1020 / DSM 3700 / CBS 544.65 / FGSC A1164 / JCM 1740 / NRRL 181 / WB 181) (Aspergillus fischerianus)).